A 250-amino-acid chain; its full sequence is NH(3)-dependent NAD(+) synthetase (250 aa).

G31–S38 serves as a coordination point for ATP. D37 lines the Mg(2+) pocket. Residue R122 coordinates deamido-NAD(+). T142 is a binding site for ATP. E147 provides a ligand contact to Mg(2+). Residues K155 and D162 each coordinate deamido-NAD(+). K171 and S193 together coordinate ATP. Residue H239–K240 participates in deamido-NAD(+) binding.

The protein belongs to the NAD synthetase family. As to quaternary structure, homodimer.

It catalyses the reaction deamido-NAD(+) + NH4(+) + ATP = AMP + diphosphate + NAD(+) + H(+). Its pathway is cofactor biosynthesis; NAD(+) biosynthesis; NAD(+) from deamido-NAD(+) (ammonia route): step 1/1. Catalyzes the ATP-dependent amidation of deamido-NAD to form NAD. Uses ammonia as a nitrogen source. The chain is NH(3)-dependent NAD(+) synthetase from Alkaliphilus oremlandii (strain OhILAs) (Clostridium oremlandii (strain OhILAs)).